We begin with the raw amino-acid sequence, 545 residues long: Chaperonin GroEL (545 aa).

ATP is bound by residues 29–32 (TMGP), Lys-50, 86–90 (DGTTT), Gly-414, 477–479 (DAA), and Asp-493.

It belongs to the chaperonin (HSP60) family. As to quaternary structure, forms a cylinder of 14 subunits composed of two heptameric rings stacked back-to-back. Interacts with the co-chaperonin GroES.

The protein localises to the cytoplasm. The catalysed reaction is ATP + H2O + a folded polypeptide = ADP + phosphate + an unfolded polypeptide.. Its function is as follows. Together with its co-chaperonin GroES, plays an essential role in assisting protein folding. The GroEL-GroES system forms a nano-cage that allows encapsulation of the non-native substrate proteins and provides a physical environment optimized to promote and accelerate protein folding. This chain is Chaperonin GroEL, found in Campylobacter jejuni subsp. jejuni serotype O:2 (strain ATCC 700819 / NCTC 11168).